A 317-amino-acid chain; its full sequence is Olfactory receptor 6Q1 (317 aa).

Topologically, residues 1 to 27 (MQPYTKNWTQVTEFVMMGFAGIHEAHL) are extracellular. N-linked (GlcNAc...) asparagine glycosylation is present at Asn7. The helical transmembrane segment at 28-48 (LFFILFLTMYLFTLVENLAII) threads the bilayer. Residues 49–56 (LVVGLDHR) are Cytoplasmic-facing. A helical membrane pass occupies residues 57–77 (LRRPMYFFLTHLSCLEIWYTS). Over 78–103 (VTVPKMLAGFIGVDGGKNISYADCLS) the chain is Extracellular. Asn95 is a glycosylation site (N-linked (GlcNAc...) asparagine). Cysteines 101 and 193 form a disulfide. A helical transmembrane segment spans residues 104–124 (QLFIFTFLGATECFLLAAMAY). Over 125-143 (DRYVAICMPLHYGAFVSWG) the chain is Cytoplasmic. A helical membrane pass occupies residues 144 to 164 (TCIRLAAACWLVGFLTPILPI). The Extracellular portion of the chain corresponds to 165–201 (YLLSQLTFYGPNVIDHFSCDASPLLALSCSDVTWKET). The helical transmembrane segment at 202 to 221 (VDFLVSLAVLLASSMVIAVS) threads the bilayer. The Cytoplasmic segment spans residues 222 to 241 (YGNIVWTLLHIRSAAERWKA). The helical transmembrane segment at 242-262 (FSTCAAHLTVVSLFYGTLFFM) threads the bilayer. Residues 263-275 (YVQTKVTSSINFN) lie on the Extracellular side of the membrane. The chain crosses the membrane as a helical span at residues 276–296 (KVVSVFYSVVTPMLNPLIYSL). The Cytoplasmic segment spans residues 297-317 (RNKEVKGALGRVFSLNFWKGQ).

This sequence belongs to the G-protein coupled receptor 1 family.

It is found in the cell membrane. In terms of biological role, odorant receptor. The chain is Olfactory receptor 6Q1 (OR6Q1) from Homo sapiens (Human).